The following is a 498-amino-acid chain: Glycerol kinase (498 aa).

Thr-12 lines the ADP pocket. Positions 12, 13, and 14 each coordinate ATP. Sn-glycerol 3-phosphate is bound at residue Thr-12. Residue Arg-16 coordinates ADP. Residues Arg-82, Glu-83, Tyr-134, and Asp-243 each contribute to the sn-glycerol 3-phosphate site. Arg-82, Glu-83, Tyr-134, Asp-243, and Gln-244 together coordinate glycerol. The ADP site is built by Thr-265 and Gly-308. Residues Thr-265, Gly-308, Gln-312, and Gly-409 each coordinate ATP. Residues Gly-409 and Asn-413 each contribute to the ADP site.

The protein belongs to the FGGY kinase family.

The catalysed reaction is glycerol + ATP = sn-glycerol 3-phosphate + ADP + H(+). It participates in polyol metabolism; glycerol degradation via glycerol kinase pathway; sn-glycerol 3-phosphate from glycerol: step 1/1. Its activity is regulated as follows. Inhibited by fructose 1,6-bisphosphate (FBP). In terms of biological role, key enzyme in the regulation of glycerol uptake and metabolism. Catalyzes the phosphorylation of glycerol to yield sn-glycerol 3-phosphate. This Petrotoga mobilis (strain DSM 10674 / SJ95) protein is Glycerol kinase.